A 442-amino-acid chain; its full sequence is N-acetyl-S-alkylcysteine sulfoxide monooxygenase (442 aa).

FMN is bound by residues Asp-58, Thr-95, His-145, Tyr-149, Ser-219, and Ser-220.

This sequence belongs to the NtaA/SnaA/DszA monooxygenase family. Homodimer.

The enzyme catalyses (R)-N-acetyl-S-benzyl-L-cysteine sulfoxide + FMNH2 + O2 = N-acetyl-S-hydroxy-L-cysteine + benzaldehyde + FMN + H2O + H(+). Its pathway is amino-acid metabolism. Involved in a cysteine salvage pathway from S-alkylcysteine. Catalyzes the C-S bond cleavage in N-acetyl-S-benzyl-L-cysteine sulfoxide leading to N-acetyl-S-hydroxy-L-cysteine and benzaldehyde. This pathway is likely important in the catabolism of alkylated cysteine generated by proteolysis of alkylated glutathione formed in the detoxification of a wide range of electrophiles. Has much less efficient activity with N-acetyl-S-methyl-L-cysteine sulfoxide as substrate. Cannot use S-alkylated L-cysteine sulfones and ketone analogs as substrates, demonstrating that the sulfoxide is required for activity. The sequence is that of N-acetyl-S-alkylcysteine sulfoxide monooxygenase from Bacillus subtilis (strain 168).